A 292-amino-acid chain; its full sequence is Formamidopyrimidine-DNA glycosylase (292 aa).

The Schiff-base intermediate with DNA role is filled by proline 2. Catalysis depends on glutamate 3, which acts as the Proton donor. Residue lysine 58 is the Proton donor; for beta-elimination activity of the active site. DNA is bound by residues histidine 98, arginine 128, and arginine 173. Residues 258 to 292 (LVYDRAGQPCRVCATPVRQIVQGQRSTFYCPNCQH) form an FPG-type zinc finger. Residue arginine 282 is the Proton donor; for delta-elimination activity of the active site.

Belongs to the FPG family. Monomer. The cofactor is Zn(2+).

The catalysed reaction is Hydrolysis of DNA containing ring-opened 7-methylguanine residues, releasing 2,6-diamino-4-hydroxy-5-(N-methyl)formamidopyrimidine.. It carries out the reaction 2'-deoxyribonucleotide-(2'-deoxyribose 5'-phosphate)-2'-deoxyribonucleotide-DNA = a 3'-end 2'-deoxyribonucleotide-(2,3-dehydro-2,3-deoxyribose 5'-phosphate)-DNA + a 5'-end 5'-phospho-2'-deoxyribonucleoside-DNA + H(+). Its function is as follows. Involved in base excision repair of DNA damaged by oxidation or by mutagenic agents. Acts as a DNA glycosylase that recognizes and removes damaged bases. Has a preference for oxidized purines, such as 7,8-dihydro-8-oxoguanine (8-oxoG). Has AP (apurinic/apyrimidinic) lyase activity and introduces nicks in the DNA strand. Cleaves the DNA backbone by beta-delta elimination to generate a single-strand break at the site of the removed base with both 3'- and 5'-phosphates. The sequence is that of Formamidopyrimidine-DNA glycosylase from Cupriavidus necator (strain ATCC 17699 / DSM 428 / KCTC 22496 / NCIMB 10442 / H16 / Stanier 337) (Ralstonia eutropha).